The following is a 2537-amino-acid chain: Centrosomal protein of 192 kDa (2537 aa).

Disordered regions lie at residues 69–138 and 288–308; these read FSVP…ATES and HSSETTHKESEESQVICLPGT. The segment covering 70–81 has biased composition (low complexity); that stretch reads SVPSGSSPGSQS. Residues 106–122 are compositionally biased toward polar residues; it reads VESQRLSNALSKQSALQ. Residues 288 to 298 are compositionally biased toward basic and acidic residues; that stretch reads HSSETTHKESE. Serine 812 is modified (phosphoserine). Disordered stretches follow at residues 950–1021, 1043–1064, 1101–1158, and 1182–1234; these read VTFE…QQQP, VSEPESSYPTTATDDALEDRKS, KGTL…WTSN, and ATSH…STVH. Polar residues predominate over residues 960 to 970; the sequence is PKNSDLKNTSP. Positions 984 to 1005 are enriched in low complexity; sequence FRPSTSPLSHSSPSEISGTSSS. 2 stretches are compositionally biased toward polar residues: residues 1046–1055 and 1103–1112; these read PESSYPTTAT and TLSSIIQNNS. Positions 1128–1141 are enriched in basic and acidic residues; it reads EYVKPDFRWSKDPS. Positions 1142–1158 are enriched in polar residues; that stretch reads SKSGNLLETSEVGWTSN. Over residues 1195-1207 the composition is skewed to basic and acidic residues; the sequence is EDQRISPKDKSTA. Over residues 1213 to 1234 the composition is skewed to polar residues; the sequence is GQVSHQTTSENQCTPIPSSTVH. 3 positions are modified to phosphoserine: serine 1755, serine 2098, and serine 2110. Proline 2313 is subject to Hydroxyproline.

In terms of assembly, interacts with SHBG. Interacts with PLK4; this interaction mediates the formation of a ternary complex composed by PLK4, TENT5C and CEP192. Interacts with CCDC66. Post-translationally, hydroxylation by PHD1/EGLN2 at Pro-2313 promotes ubiquitination. Ubiquitinated by a SCF(SKP2) complex following proline hydroxylation. In terms of processing, ubiquitinated in a FBXL13-dependent manner, leading to proteasomal degradation.

The protein localises to the cytoplasm. Its subcellular location is the cytoskeleton. The protein resides in the microtubule organizing center. It localises to the centrosome. It is found in the centriole. Functionally, required for mitotic centrosome maturation and bipolar spindle assembly. Appears to be a major regulator of pericentriolar material (PCM) recruitment, centrosome maturation, and centriole duplication. Centrosome-specific activating scaffold for AURKA and PLK1. This chain is Centrosomal protein of 192 kDa, found in Homo sapiens (Human).